Reading from the N-terminus, the 363-residue chain is DNA replication and repair protein RecF (363 aa).

30-37 lines the ATP pocket; sequence GDNAQGKT.

Belongs to the RecF family.

It localises to the cytoplasm. The RecF protein is involved in DNA metabolism; it is required for DNA replication and normal SOS inducibility. RecF binds preferentially to single-stranded, linear DNA. It also seems to bind ATP. The sequence is that of DNA replication and repair protein RecF from Syntrophotalea carbinolica (strain DSM 2380 / NBRC 103641 / GraBd1) (Pelobacter carbinolicus).